The primary structure comprises 895 residues: Ral guanine nucleotide dissociation stimulator (895 aa).

The 126-residue stretch at 112-237 folds into the N-terminal Ras-GEF domain; that stretch reads KVRTVKAGTL…RAHLLLAQLE (126 aa). A disordered region spans residues 301–324; the sequence is SELEPALEPPLDPEPTLAPAPELD. Positions 307 to 318 are enriched in pro residues; that stretch reads LEPPLDPEPTLA. A Ras-GEF domain is found at 367–629; the sequence is PPDLVAEQFT…YNLSCELEPP (263 aa). 2 disordered regions span residues 650–669 and 708–754; these read ERRQAPSTELSTSSSAHSKS and VPES…STTR. Low complexity-rich tracts occupy residues 656-667 and 726-753; these read STELSTSSSAHS and SSPETSGISSASSSTSSSSASTTPVSTT. One can recognise a Ras-associating domain in the interval 779-866; sequence DCCIIRVSLD…YDFILKKRAF (88 aa). Tyr-795 carries the post-translational modification Phosphotyrosine.

Interacts with RIT1 and RIT2. Interacts with TRAF3. Interacts with HRAS. Phosphorylation of Tyr-795 by MET blocks HRAS binding. Expressed in all tissues examined.

The protein resides in the cytoplasm. It localises to the nucleus. Functions as a guanine nucleotide exchange factor (GEF) activating either RalA or RalB GTPases and plays an important role in intracellular transport. Interacts and acts as an effector molecule for R-Ras, H-Ras, K-Ras, and Rap. During bacterial clearance, recognizes 'Lys-33'-linked polyubiquitinated TRAF3 and subsequently mediates assembly of the exocyst complex. In Rattus norvegicus (Rat), this protein is Ral guanine nucleotide dissociation stimulator (Ralgds).